Reading from the N-terminus, the 428-residue chain is Large envelope protein (428 aa).

The N-myristoyl glycine; by host moiety is linked to residue glycine 2. Residues 2-145 (GNNIKVTFDP…PPLRDTHPHL (144 aa)) form a pre-S1 region. The segment at 2-204 (GNNIKVTFDP…PLTIGDPVLS (203 aa)) is pre-S. Over 2 to 211 (GNNIKVTFDP…VLSTEMSPSG (210 aa)) the chain is Virion surface; in external conformation. The Intravirion; in internal conformation portion of the chain corresponds to 2-283 (GNNIKVTFDP…NGFRWMYLRR (282 aa)). Asparagine 3 carries an N-linked (GlcNAc...) asparagine glycan. The tract at residues 110-144 (RDIPRGIVPPQTPSNRDQRRKPTPLTPPLRDTHPH) is disordered. The segment at 146–204 (TMKNQTGHLQGFAEGLRALTTSDHHNSAYGDPFTTLSPVVPTVSTTLSPPLTIGDPVLS) is pre-S2. Residues 212-232 (LLGLLAGLQVVYFLWTKILTI) traverse the membrane as a helical segment. The Intravirion; in external conformation portion of the chain corresponds to 233 to 283 (AQSLDWWWTSLSFPGGIPECTGQNLQFQTCKHLPTSCPPTCNGFRWMYLRR). A helical membrane pass occupies residues 284–304 (FIIYLLVLLLFLTFLLVLLDW). Topologically, residues 305–376 (KGLLPVCPMM…WALARFSWLS (72 aa)) are virion surface. Residue asparagine 348 is glycosylated (N-linked (GlcNAc...) asparagine; by host). The chain crosses the membrane as a helical span at residues 377-397 (LLVPLLQWLGGISLTVWLLLI). Over 398–403 (WMIWFW) the chain is Intravirion. The chain crosses the membrane as a helical span at residues 404 to 426 (GPVLMSILPPFIPIFALFFLIWA). Residues 427 to 428 (YI) lie on the Virion surface side of the membrane.

This sequence belongs to the orthohepadnavirus major surface antigen family. In terms of assembly, in its internal form (Li-HBsAg), interacts with the capsid protein and with the isoform S. Interacts with host chaperone CANX. As to quaternary structure, associates with host chaperone CANX through its pre-S2 N glycan; this association may be essential for isoform M proper secretion. Interacts with isoform L. Interacts with the antigens of satellite virus HDV (HDVAgs); this interaction is required for encapsidation of HDV genomic RNA. In terms of processing, isoform M is N-terminally acetylated by host at a ratio of 90%, and N-glycosylated by host at the pre-S2 region. Post-translationally, myristoylated.

It localises to the virion membrane. In terms of biological role, the large envelope protein exists in two topological conformations, one which is termed 'external' or Le-HBsAg and the other 'internal' or Li-HBsAg. In its external conformation the protein attaches the virus to cell receptors and thereby initiating infection. This interaction determines the species specificity and liver tropism. This attachment induces virion internalization predominantly through caveolin-mediated endocytosis. The large envelope protein also assures fusion between virion membrane and endosomal membrane. In its internal conformation the protein plays a role in virion morphogenesis and mediates the contact with the nucleocapsid like a matrix protein. Functionally, the middle envelope protein plays an important role in the budding of the virion. It is involved in the induction of budding in a nucleocapsid independent way. In this process the majority of envelope proteins bud to form subviral lipoprotein particles of 22 nm of diameter that do not contain a nucleocapsid. In Ground squirrel hepatitis virus (strain 27) (GSHV), this protein is Large envelope protein.